We begin with the raw amino-acid sequence, 225 residues long: MGIRAIVVDTAGTTTDLNFIQDTLFPYSSKALADFLEENQTNVLVDNCISDVKDIALEPDASLERVVEILQQWIAEDRKATPLKTLQGLIWKQGYAQGEFKGHIYPDFIDSVKEIKAQNVRLYSFSSGSVDAQKLLFSHSDGGDLTEYFDGHFDTRTGNKLFKQAYLNIINTISLAPKQVLFISDVLEELKAAEQAGMRVMQMVRETTQRTGDYPQITNFKELSF.

This sequence belongs to the HAD-like hydrolase superfamily. MasA/MtnC family. As to quaternary structure, monomer. It depends on Mg(2+) as a cofactor.

It catalyses the reaction 5-methylsulfanyl-2,3-dioxopentyl phosphate + H2O = 1,2-dihydroxy-5-(methylsulfanyl)pent-1-en-3-one + phosphate. It participates in amino-acid biosynthesis; L-methionine biosynthesis via salvage pathway; L-methionine from S-methyl-5-thio-alpha-D-ribose 1-phosphate: step 3/6. It functions in the pathway amino-acid biosynthesis; L-methionine biosynthesis via salvage pathway; L-methionine from S-methyl-5-thio-alpha-D-ribose 1-phosphate: step 4/6. In terms of biological role, bifunctional enzyme that catalyzes the enolization of 2,3-diketo-5-methylthiopentyl-1-phosphate (DK-MTP-1-P) into the intermediate 2-hydroxy-3-keto-5-methylthiopentenyl-1-phosphate (HK-MTPenyl-1-P), which is then dephosphorylated to form the acireductone 1,2-dihydroxy-3-keto-5-methylthiopentene (DHK-MTPene). This Shewanella loihica (strain ATCC BAA-1088 / PV-4) protein is Enolase-phosphatase E1.